We begin with the raw amino-acid sequence, 418 residues long: Nuclear receptor coactivator 6 (418 aa).

Disordered regions lie at residues 1–21 (EQIM…QNQS) and 77–98 (PPGP…ANND). Residues 1–215 (EQIMTNQMQG…PPRKKKNCHQ (215 aa)) form a TBP/GTF2A-binding region region. The segment at 1 to 352 (EQIMTNQMQG…LPVSQNVHPP (352 aa)) is CREBBP-binding region. Residues 1–418 (EQIMTNQMQG…YQESPQNSSS (418 aa)) form an NCOA1-binding region region. The segment at 60–214 (VSNSPSQVMG…KPPRKKKNCH (155 aa)) is NCOA6IP-binding region. The span at 84–98 (MAQQHTDPATTANND) shows a compositional bias: polar residues. Ser-171 is subject to Phosphoserine. The LXXLL motif signature appears at 174–178 (LVNLL). Positions 186–418 (HFGVNNKQNN…YQESPQNSSS (233 aa)) are disordered. The segment covering 190 to 199 (NNKQNNTNAN) has biased composition (low complexity). The segment covering 200 to 212 (KQKKKKPPRKKKN) has biased composition (basic residues). Residues 269–279 (PLQQMPPQLMQ) show a composition bias toward low complexity. The span at 282 to 310 (APPPQPPQQQPQPQLPQQQPQPQPPPPSQ) shows a compositional bias: pro residues. Residues 311-336 (PQSQQQQQQQQQQQQQQMMMMLMMQQ) are compositionally biased toward low complexity. Arg-342 and Arg-353 each carry asymmetric dimethylarginine. Positions 358-370 (PDSQRVPMQQSGN) are enriched in polar residues. Arg-391 is modified (asymmetric dimethylarginine). Residues 399–418 (PLGSNSRKMVYQESPQNSSS) show a composition bias toward polar residues.

Monomer and homodimer. Interacts in vitro with the basal transcription factors GTF2A and TBP, suggesting an autonomous transactivation function. Interacts with NCOA1, CRSP3, RBM14, the histone acetyltransferase proteins EP300 and CREBBP, and with methyltransferase proteins NCOA6IP and PRMT2. Component of the MLL2/3 complex (also named ASCOM complex), at least composed of KMT2D/MLL2 or KMT2C/MLL3, ASH2L, RBBP5, WDR5, NCOA6, DPY30, KDM6A, PAXIP1/PTIP, PAGR1 and alpha- and beta-tubulin. Interacts with ZNF335; may enhance ligand-dependent transcriptional activation by nuclear hormone receptors. Phosphorylated.

It localises to the nucleus. In terms of biological role, nuclear receptor coactivator that directly binds nuclear receptors and stimulates the transcriptional activities in a hormone-dependent fashion. Coactivate expression in an agonist- and AF2-dependent manner. May coactivate expression via a remodeling of chromatin and its interaction with histone acetyltransferase proteins. Involved in the coactivation of different nuclear receptors, such as for steroids (GR and ERs), retinoids (RARs and RXRs), thyroid hormone (TRs), vitamin D3 (VDR) and prostanoids (PPARs). Probably functions as a general coactivator, rather than just a nuclear receptor coactivator. May also be involved in the coactivation of the NF-kappa-B pathway. The chain is Nuclear receptor coactivator 6 (Ncoa6) from Rattus norvegicus (Rat).